Here is a 165-residue protein sequence, read N- to C-terminus: Biosynthetic peptidoglycan transglycosylase (165 aa).

The protein belongs to the glycosyltransferase 51 family.

The protein localises to the cell inner membrane. It carries out the reaction [GlcNAc-(1-&gt;4)-Mur2Ac(oyl-L-Ala-gamma-D-Glu-L-Lys-D-Ala-D-Ala)](n)-di-trans,octa-cis-undecaprenyl diphosphate + beta-D-GlcNAc-(1-&gt;4)-Mur2Ac(oyl-L-Ala-gamma-D-Glu-L-Lys-D-Ala-D-Ala)-di-trans,octa-cis-undecaprenyl diphosphate = [GlcNAc-(1-&gt;4)-Mur2Ac(oyl-L-Ala-gamma-D-Glu-L-Lys-D-Ala-D-Ala)](n+1)-di-trans,octa-cis-undecaprenyl diphosphate + di-trans,octa-cis-undecaprenyl diphosphate + H(+). The protein operates within cell wall biogenesis; peptidoglycan biosynthesis. In terms of biological role, peptidoglycan polymerase that catalyzes glycan chain elongation from lipid-linked precursors. The chain is Biosynthetic peptidoglycan transglycosylase from Neisseria meningitidis.